Reading from the N-terminus, the 245-residue chain is Adenosylcobinamide-GDP ribazoletransferase (245 aa).

Transmembrane regions (helical) follow at residues tryptophan 35–leucine 55, isoleucine 108–histidine 128, glycine 137–valine 157, isoleucine 176–methionine 196, threonine 197–arginine 217, and isoleucine 222–alanine 242.

Belongs to the CobS family. Mg(2+) serves as cofactor.

It localises to the cell inner membrane. It carries out the reaction alpha-ribazole + adenosylcob(III)inamide-GDP = adenosylcob(III)alamin + GMP + H(+). It catalyses the reaction alpha-ribazole 5'-phosphate + adenosylcob(III)inamide-GDP = adenosylcob(III)alamin 5'-phosphate + GMP + H(+). Its pathway is cofactor biosynthesis; adenosylcobalamin biosynthesis; adenosylcobalamin from cob(II)yrinate a,c-diamide: step 7/7. Joins adenosylcobinamide-GDP and alpha-ribazole to generate adenosylcobalamin (Ado-cobalamin). Also synthesizes adenosylcobalamin 5'-phosphate from adenosylcobinamide-GDP and alpha-ribazole 5'-phosphate. The protein is Adenosylcobinamide-GDP ribazoletransferase of Nitratidesulfovibrio vulgaris (strain DP4) (Desulfovibrio vulgaris).